The sequence spans 367 residues: 4-hydroxy-3-methylbut-2-en-1-yl diphosphate synthase (flavodoxin) (367 aa).

4 residues coordinate [4Fe-4S] cluster: Cys270, Cys273, Cys305, and Glu312.

Belongs to the IspG family. The cofactor is [4Fe-4S] cluster.

The catalysed reaction is (2E)-4-hydroxy-3-methylbut-2-enyl diphosphate + oxidized [flavodoxin] + H2O + 2 H(+) = 2-C-methyl-D-erythritol 2,4-cyclic diphosphate + reduced [flavodoxin]. It functions in the pathway isoprenoid biosynthesis; isopentenyl diphosphate biosynthesis via DXP pathway; isopentenyl diphosphate from 1-deoxy-D-xylulose 5-phosphate: step 5/6. Functionally, converts 2C-methyl-D-erythritol 2,4-cyclodiphosphate (ME-2,4cPP) into 1-hydroxy-2-methyl-2-(E)-butenyl 4-diphosphate. This Pasteurella multocida (strain Pm70) protein is 4-hydroxy-3-methylbut-2-en-1-yl diphosphate synthase (flavodoxin).